The following is a 93-amino-acid chain: U12-lycotoxin-Ls1e (93 aa).

An N-terminal signal peptide occupies residues 1–18 (MKFAVILLFTLVVLAVAS). The propeptide occupies 19–38 (ESVEEDTREIDVEEFQEQQR).

Belongs to the neurotoxin 31 family. In terms of processing, contains 5 disulfide bonds. Expressed by the venom gland.

The protein resides in the secreted. The protein is U12-lycotoxin-Ls1e of Lycosa singoriensis (Wolf spider).